A 184-amino-acid polypeptide reads, in one-letter code: Spiro-conjugate synthase (184 aa).

A disulfide bridge links Cys57 with Cys184. (1S,3R,6R,8R,9R,11R,14S,15S,19R,20R)-8-ethyl-9,15-dihydroxy-3,4,6,20-tetramethyl-21,23-dioxo-24-azapentacyclo[20.2.1.0(1,6).0(11,20).0(14,19)]pentacosa-4,12,22(25)-trien-25-olate is bound at residue Gln115.

As to quaternary structure, homodimer.

The enzyme catalyses 4-[(1R,2R,4aS,5S,8aR)-2-[(2R,3R,5E,7E)-3-ethyl-2-hydroxy-5,7-dimethylnona-5,7-dien-1-yl]-5-hydroxy-1-methyl-1,2,4a,5,6,7,8,8a-octahydronaphthalene-1-carbonyl]-2-methylidene-5-oxo-2,5-dihydro-1H-pyrrol-3-olate = (1S,3R,6R,8R,9R,11R,14S,15S,19R,20R)-8-ethyl-9,15-dihydroxy-3,4,6,20-tetramethyl-21,23-dioxo-24-azapentacyclo[20.2.1.0(1,6).0(11,20).0(14,19)]pentacosa-4,12,22(25)-trien-25-olate. The protein operates within antibiotic biosynthesis. Its function is as follows. Involved in the biosynthesis of the spirotetramate antibiotics pyrroindomycins. Catalyzes the intramolecular cyclization forming the spiro-conjugate moiety in pyrroindomycins, via an exo-selective [4+2] cycloaddition reaction. In Streptomyces rugosporus, this protein is Spiro-conjugate synthase.